A 181-amino-acid chain; its full sequence is Protoporphyrinogen IX dehydrogenase [quinone] (181 aa).

In terms of domain architecture, Flavodoxin-like spans 3-172 (TLILFSTRDG…QVANFAREIA (170 aa)). FMN contacts are provided by residues 9–13 (TRDGQ) and 84–152 (FYSV…ETDT).

Belongs to the HemG family. The cofactor is FMN.

It is found in the cell inner membrane. It carries out the reaction protoporphyrinogen IX + 3 a menaquinone = protoporphyrin IX + 3 a menaquinol. The catalysed reaction is protoporphyrinogen IX + 3 a ubiquinone = protoporphyrin IX + 3 a ubiquinol. The enzyme catalyses protoporphyrinogen IX + 3 a quinone = protoporphyrin IX + 3 a quinol. The protein operates within porphyrin-containing compound metabolism; protoporphyrin-IX biosynthesis; protoporphyrin-IX from protoporphyrinogen-IX: step 1/1. Catalyzes the 6-electron oxidation of protoporphyrinogen IX to form protoporphyrin IX; under anaerobic conditions uses menaquinone as an electron acceptor, under aerobic condition uses ubiquinone as an electron acceptor. This Escherichia coli O157:H7 protein is Protoporphyrinogen IX dehydrogenase [quinone].